A 395-amino-acid chain; its full sequence is Synaptotagmin-8 (395 aa).

Topologically, residues 1-44 (MQADRSMKMGHALNPFSTSAPLDATAGPSLIPDLITRIPWPRWT) are extracellular. The chain crosses the membrane as a helical; Signal-anchor for type III membrane protein span at residues 45-65 (LFIAILAAGVLLVSCLLCVIC). Residues 66–395 (CYCHRHRHRK…PRLPLLRPRS (330 aa)) lie on the Cytoplasmic side of the membrane. C2 domains lie at 113–229 (QWGR…ESWY) and 241–370 (QMGE…AQWH).

It belongs to the synaptotagmin family. As to quaternary structure, homodimer or homooligomer. Homodimerization and homooligomerization do not depend on Ca(2+). Interacts with SYNCRIP isoform 2 C-terminus. Binds inositol 1,3,4,5-tetrakisphosphate (IP4). Binds to AP2 in a Ca(2+)-independent manner. Interacts with STX1A, STX1B and STX2; the interaction is Ca(2+)-dependent. In terms of tissue distribution, ubiquitous. Detected in testis and brain. Expressed in primary neurons, neuroendocrine and endocrine cells.

It localises to the cytoplasm. It is found in the cell membrane. Its subcellular location is the cytoplasmic vesicle. The protein localises to the secretory vesicle. The protein resides in the acrosome. In terms of biological role, involved in the trafficking and exocytosis of secretory vesicles in non-neuronal tissues. Mediates Ca(2+)-regulation of exocytosis acrosomal reaction in sperm. May mediate Ca(2+)-regulation of exocytosis in insulin secreted cells. This chain is Synaptotagmin-8 (Syt8), found in Mus musculus (Mouse).